We begin with the raw amino-acid sequence, 457 residues long: Siroheme synthase (457 aa).

The segment at 1-204 (MDHLPIFCQL…NDQKAITETT (204 aa)) is precorrin-2 dehydrogenase /sirohydrochlorin ferrochelatase. NAD(+)-binding positions include 22–23 (DV) and 43–44 (LA). Residue Ser128 is modified to Phosphoserine. Positions 216–457 (GEVVLVGAGP…RDKLNWFSNH (242 aa)) are uroporphyrinogen-III C-methyltransferase. Pro225 lines the S-adenosyl-L-methionine pocket. The Proton acceptor role is filled by Asp248. Lys270 serves as the catalytic Proton donor. Residues 301-303 (GGD), Ile306, 331-332 (TA), Met382, and Gly411 contribute to the S-adenosyl-L-methionine site.

The protein in the N-terminal section; belongs to the precorrin-2 dehydrogenase / sirohydrochlorin ferrochelatase family. It in the C-terminal section; belongs to the precorrin methyltransferase family.

It catalyses the reaction uroporphyrinogen III + 2 S-adenosyl-L-methionine = precorrin-2 + 2 S-adenosyl-L-homocysteine + H(+). It carries out the reaction precorrin-2 + NAD(+) = sirohydrochlorin + NADH + 2 H(+). The enzyme catalyses siroheme + 2 H(+) = sirohydrochlorin + Fe(2+). The protein operates within cofactor biosynthesis; adenosylcobalamin biosynthesis; precorrin-2 from uroporphyrinogen III: step 1/1. Its pathway is cofactor biosynthesis; adenosylcobalamin biosynthesis; sirohydrochlorin from precorrin-2: step 1/1. It functions in the pathway porphyrin-containing compound metabolism; siroheme biosynthesis; precorrin-2 from uroporphyrinogen III: step 1/1. It participates in porphyrin-containing compound metabolism; siroheme biosynthesis; siroheme from sirohydrochlorin: step 1/1. The protein operates within porphyrin-containing compound metabolism; siroheme biosynthesis; sirohydrochlorin from precorrin-2: step 1/1. Multifunctional enzyme that catalyzes the SAM-dependent methylations of uroporphyrinogen III at position C-2 and C-7 to form precorrin-2 via precorrin-1. Then it catalyzes the NAD-dependent ring dehydrogenation of precorrin-2 to yield sirohydrochlorin. Finally, it catalyzes the ferrochelation of sirohydrochlorin to yield siroheme. This chain is Siroheme synthase, found in Escherichia fergusonii (strain ATCC 35469 / DSM 13698 / CCUG 18766 / IAM 14443 / JCM 21226 / LMG 7866 / NBRC 102419 / NCTC 12128 / CDC 0568-73).